A 692-amino-acid chain; its full sequence is Methionine--tRNA ligase (692 aa).

Positions 15 to 25 (PYANGPIHLGH) match the 'HIGH' region motif. Zn(2+)-binding residues include Cys-146, Cys-149, Cys-159, and Cys-162. The short motif at 332–336 (KMSKS) is the 'KMSKS' region element. Position 335 (Lys-335) interacts with ATP. Residues 552–577 (TTEAAPEKKAKKSAETADVAVDTRSP) are disordered. Over residues 556–566 (APEKKAKKSAE) the composition is skewed to basic and acidic residues. One can recognise a tRNA-binding domain in the interval 591–692 (DFAKLDLRIA…EGAQPGMRVK (102 aa)).

It belongs to the class-I aminoacyl-tRNA synthetase family. MetG type 1 subfamily. Homodimer. It depends on Zn(2+) as a cofactor.

The protein localises to the cytoplasm. It catalyses the reaction tRNA(Met) + L-methionine + ATP = L-methionyl-tRNA(Met) + AMP + diphosphate. Functionally, is required not only for elongation of protein synthesis but also for the initiation of all mRNA translation through initiator tRNA(fMet) aminoacylation. The protein is Methionine--tRNA ligase of Shewanella sediminis (strain HAW-EB3).